The primary structure comprises 607 residues: WD repeat-containing protein 1-B (607 aa).

WD repeat units follow at residues 4–45, 48–87, 93–135, 138–176, 180–218, 224–263, 270–306, 311–351, 358–408, 432–474, 480–518, 523–561, and 566–604; these read EIKK…IRNI, PAIA…IWDT, LLKY…LWDT, SVGE…FFEG, KFKF…LYDG, VCSL…IWDV, TTFN…YLDK, KPFR…YWDA, TFTG…KMDV, LKDK…LYSI, KDEG…VFSV, SEHN…VWTL, and TRIK…QWTV.

The protein belongs to the WD repeat AIP1 family.

The protein localises to the cell membrane. It localises to the cytoplasm. Its subcellular location is the cytoskeleton. The protein resides in the nucleus. Functionally, induces disassembly of actin filaments in conjunction with ADF/cofilin family proteins. Doesn't sever actin filaments alone, but caps the barbed ends of filaments severed by cofilin, which blocks annealing and depolymerization and allows more extensive severing by cofilin. The protein is WD repeat-containing protein 1-B (wdr1-b) of Xenopus laevis (African clawed frog).